Reading from the N-terminus, the 372-residue chain is E3 ubiquitin-protein ligase RNF34 (372 aa).

Residues 56 to 107 form an FYVE-type zinc finger; it reads EGPNIVCKACGLSFSVFRKKHVCCDCKKDFCSVCSVLQENLRRCSTCHLLQE. An SAP 1 domain is found at 115 to 134; the sequence is LMRLKVKDLRQYLILRNIPI. Ser-169 is subject to Phosphoserine. The segment at 194–253 is disordered; that stretch reads QGELMDGDQTSRSGVPAQVQSEITSANTEDDDDDDDEDDDDEEENAEDRNPGLSKERVRA. A compositionally biased stretch (polar residues) spans 201–220; it reads DQTSRSGVPAQVQSEITSAN. Positions 221 to 239 are enriched in acidic residues; it reads TEDDDDDDDEDDDDEEENA. The span at 240-252 shows a compositional bias: basic and acidic residues; the sequence is EDRNPGLSKERVR. 2 positions are modified to phosphoserine: Ser-254 and Ser-256. Positions 264 to 278 constitute an SAP 2 domain; that stretch reads VEGMSVRQLKEILAR. The segment at 325 to 360 adopts an RING-type zinc-finger fold; that stretch reads CRICMDAVIDCVLLECGHMVTCTKCGKRMSECPICR.

In terms of assembly, interacts with CASP8 and CASP10. Interacts (via RING-type zinc finger) with PPARGC1A. Interacts with NOD1. Interacts with p53/TP53; involved in p53/TP53 ubiquitination. Interacts (via RING-type zinc finger) with MDM2; the interaction stabilizes MDM2. Post-translationally, autoubiquitinated (in vitro). In terms of processing, proteolytically cleaved by caspases upon induction of apoptosis by TNF. As to expression, ubiquitous. Detected in heart, brain, liver, skeletal muscle, kidney, pancreas, spleen, thymus, prostate, testis, ovary, colon and leukocytes.

It is found in the cell membrane. The protein localises to the endomembrane system. Its subcellular location is the nucleus. The protein resides in the nucleus speckle. It localises to the cytoplasm. It is found in the cytosol. It catalyses the reaction S-ubiquitinyl-[E2 ubiquitin-conjugating enzyme]-L-cysteine + [acceptor protein]-L-lysine = [E2 ubiquitin-conjugating enzyme]-L-cysteine + N(6)-ubiquitinyl-[acceptor protein]-L-lysine.. It functions in the pathway protein modification; protein ubiquitination. E3 ubiquitin-protein ligase that regulates several biological processes through the ubiquitin-mediated proteasomal degradation of various target proteins. Ubiquitinates the caspases CASP8 and CASP10, promoting their proteasomal degradation, to negatively regulate cell death downstream of death domain receptors in the extrinsic pathway of apoptosis. May mediate 'Lys-48'-linked polyubiquitination of RIPK1 and its subsequent proteasomal degradation thereby indirectly regulating the tumor necrosis factor-mediated signaling pathway. Negatively regulates p53/TP53 through its direct ubiquitination and targeting to proteasomal degradation. Indirectly, may also negatively regulate p53/TP53 through ubiquitination and degradation of SFN. Mediates PPARGC1A proteasomal degradation probably through ubiquitination thereby indirectly regulating the metabolism of brown fat cells. Possibly involved in innate immunity, through 'Lys-48'-linked polyubiquitination of NOD1 and its subsequent proteasomal degradation. This chain is E3 ubiquitin-protein ligase RNF34, found in Homo sapiens (Human).